The primary structure comprises 122 residues: Fluoride-specific ion channel FluC (122 aa).

4 helical membrane-spanning segments follow: residues 4 to 24 (LLIA…GTAI), 34 to 54 (IGTM…MTLL), 66 to 86 (LALV…EWET), and 95 to 115 (FWIG…AVWF). Residues G74 and T77 each coordinate Na(+).

The protein belongs to the fluoride channel Fluc/FEX (TC 1.A.43) family.

The protein localises to the cell inner membrane. The enzyme catalyses fluoride(in) = fluoride(out). Na(+) is not transported, but it plays an essential structural role and its presence is essential for fluoride channel function. Its function is as follows. Fluoride-specific ion channel. Important for reducing fluoride concentration in the cell, thus reducing its toxicity. The sequence is that of Fluoride-specific ion channel FluC from Solibacter usitatus (strain Ellin6076).